Consider the following 393-residue polypeptide: Cysteine protease ATG4B (393 aa).

M1 carries the N-acetylmethionine modification. S34 carries the phosphoserine modification. Residue C74 is the Nucleophile of the active site. S-nitrosocysteine is present on C189. Residues D278 and H280 contribute to the active site. S-nitrosocysteine occurs at positions 292 and 301. A disulfide bridge links C292 with C361. Phosphoserine occurs at positions 316 and 383. Positions 388 to 391 match the LIR motif; the sequence is FEIL. S392 is subject to Phosphoserine.

It belongs to the peptidase C54 family. Interacts with PFKP; promoting phosphorylation of ATG4B at Ser-34. Interacts with GBP7. Post-translationally, phosphorylation at Ser-383 and Ser-392 promotes autophagy by increasing protein delipidation activity without affecting proteolytic activation of ATG8 proteins. Phosphorylation at Ser-316 by ULK1 inhibits autophagy by decreasing both proteolytic activation and delipidation activities. Phosphorylation at Ser-316 is dephosphorylated by protein phosphatase 2A (PP2A). Phosphorylation at Ser-34 by AKT2 promotes its hydrolase activity, leading to increased proteolytic activation and delipidation of ATG8 family proteins. Phosphorylation at Ser-34 by AKT1 promotes mitochondrial localization and inhibition of the F1F0-ATP synthase activity, leading to elevation of mitochondrial reactive oxygen species (ROS). Ubiquitinated by RNF5, leading to its degradation by the proteasome. In terms of processing, S-nitrosylation in response to high glucose decreases both proteolytic activation and delipidation activities. Post-translationally, O-glycosylated by OGT, leading to increase protease activity, thereby promoting the proteolytic activation of ATG8 family proteins. Forms reversible intrachain disulfide bonds in response to oxidative stress. Forms interchain disulfide bonds, leading to formation of homooligomers in response to oxidation.

It localises to the cytoplasm. Its subcellular location is the cytosol. The protein localises to the cytoplasmic vesicle. The protein resides in the autophagosome. It is found in the endoplasmic reticulum. It localises to the mitochondrion. The catalysed reaction is [protein]-C-terminal L-amino acid-glycyl-phosphatidylethanolamide + H2O = [protein]-C-terminal L-amino acid-glycine + a 1,2-diacyl-sn-glycero-3-phosphoethanolamine. It carries out the reaction [protein]-C-terminal L-amino acid-glycyl-phosphatidylserine + H2O = [protein]-C-terminal L-amino acid-glycine + a 1,2-diacyl-sn-glycero-3-phospho-L-serine. Inhibited by N-ethylmaleimide. Redox-regulated during autophagy since reducing conditions activate ATG4A whereas an oxidizing environment such as the presence of H(2)O(2) inhibits its activity. The cysteine protease activity compounds is inhibited by styrylquinoline compounds 4-28 and LV-320. Its function is as follows. Cysteine protease that plays a key role in autophagy by mediating both proteolytic activation and delipidation of ATG8 family proteins. Required for canonical autophagy (macroautophagy), non-canonical autophagy as well as for mitophagy. The protease activity is required for proteolytic activation of ATG8 family proteins: cleaves the C-terminal amino acid of ATG8 proteins MAP1LC3A, MAP1LC3B, MAP1LC3C, GABARAPL1, GABARAPL2 and GABARAP, to reveal a C-terminal glycine. Exposure of the glycine at the C-terminus is essential for ATG8 proteins conjugation to phosphatidylethanolamine (PE) and insertion to membranes, which is necessary for autophagy. Protease activity is also required to counteract formation of high-molecular weight conjugates of ATG8 proteins (ATG8ylation): acts as a deubiquitinating-like enzyme that removes ATG8 conjugated to other proteins, such as ATG3. In addition to the protease activity, also mediates delipidation of ATG8 family proteins. Catalyzes delipidation of PE-conjugated forms of ATG8 proteins during macroautophagy. Also involved in non-canonical autophagy, a parallel pathway involving conjugation of ATG8 proteins to single membranes at endolysosomal compartments, by catalyzing delipidation of ATG8 proteins conjugated to phosphatidylserine (PS). Compared to other members of the family (ATG4A, ATG4C or ATG4C), constitutes the major protein for proteolytic activation of ATG8 proteins, while it displays weaker delipidation activity than other ATG4 paralogs. Involved in phagophore growth during mitophagy independently of its protease activity and of ATG8 proteins: acts by regulating ATG9A trafficking to mitochondria and promoting phagophore-endoplasmic reticulum contacts during the lipid transfer phase of mitophagy. The chain is Cysteine protease ATG4B from Rattus norvegicus (Rat).